The following is a 575-amino-acid chain: Urease subunit alpha (575 aa).

The Urease domain maps to 137-575; sequence GGIDSHIHWI…LPMAQRYFLF (439 aa). Positions 142, 144, and 225 each coordinate Ni(2+). Lys-225 bears the N6-carboxylysine mark. Residue His-227 participates in substrate binding. Positions 254 and 280 each coordinate Ni(2+). His-328 (proton donor) is an active-site residue. Position 368 (Asp-368) interacts with Ni(2+).

This sequence belongs to the metallo-dependent hydrolases superfamily. Urease alpha subunit family. In terms of assembly, heterotrimer of UreA (gamma), UreB (beta) and UreC (alpha) subunits. Three heterotrimers associate to form the active enzyme. Requires Ni cation as cofactor. Carboxylation allows a single lysine to coordinate two nickel ions.

It is found in the cytoplasm. It catalyses the reaction urea + 2 H2O + H(+) = hydrogencarbonate + 2 NH4(+). It participates in nitrogen metabolism; urea degradation; CO(2) and NH(3) from urea (urease route): step 1/1. In Leptothrix cholodnii (strain ATCC 51168 / LMG 8142 / SP-6) (Leptothrix discophora (strain SP-6)), this protein is Urease subunit alpha.